The sequence spans 603 residues: Elongation factor 4 (603 aa).

Positions 6 to 188 (KYVRNFSIIA…DIVKNVPAPI (183 aa)) constitute a tr-type G domain. GTP is bound by residues 18–23 (DHGKST) and 135–138 (NKID).

The protein belongs to the TRAFAC class translation factor GTPase superfamily. Classic translation factor GTPase family. LepA subfamily.

It localises to the cell membrane. It catalyses the reaction GTP + H2O = GDP + phosphate + H(+). Its function is as follows. Required for accurate and efficient protein synthesis under certain stress conditions. May act as a fidelity factor of the translation reaction, by catalyzing a one-codon backward translocation of tRNAs on improperly translocated ribosomes. Back-translocation proceeds from a post-translocation (POST) complex to a pre-translocation (PRE) complex, thus giving elongation factor G a second chance to translocate the tRNAs correctly. Binds to ribosomes in a GTP-dependent manner. The chain is Elongation factor 4 from Finegoldia magna (strain ATCC 29328 / DSM 20472 / WAL 2508) (Peptostreptococcus magnus).